The sequence spans 217 residues: Adenylate kinase (217 aa).

Residue 10-15 (GAGKGT) participates in ATP binding. The interval 30-59 (STGDMFREAVAAGTELGVKVQNILSSGALV) is NMP. AMP is bound by residues Thr31, Arg36, 57-59 (ALV), 85-88 (GYPR), and Gln92. The interval 126-163 (SRRICPKCGKIYNLISMPPVSDQICDDCGEQLVIREDD) is LID. ATP is bound at residue Arg127. Zn(2+) is bound by residues Cys130 and Cys133. Residue 136-137 (IY) coordinates ATP. Zn(2+) is bound by residues Cys150 and Cys153. Positions 160 and 171 each coordinate AMP. Arg199 lines the ATP pocket.

Belongs to the adenylate kinase family. In terms of assembly, monomer.

It localises to the cytoplasm. The enzyme catalyses AMP + ATP = 2 ADP. It functions in the pathway purine metabolism; AMP biosynthesis via salvage pathway; AMP from ADP: step 1/1. Its function is as follows. Catalyzes the reversible transfer of the terminal phosphate group between ATP and AMP. Plays an important role in cellular energy homeostasis and in adenine nucleotide metabolism. This chain is Adenylate kinase, found in Pseudothermotoga lettingae (strain ATCC BAA-301 / DSM 14385 / NBRC 107922 / TMO) (Thermotoga lettingae).